Here is a 178-residue protein sequence, read N- to C-terminus: uncharacterized protein (178 aa).

Residues 9 to 173 (LTLRKMELED…IDVYMFSLLK (165 aa)) form the N-acetyltransferase domain.

This is an uncharacterized protein from Bacillus licheniformis.